Consider the following 405-residue polypeptide: uncharacterized protein (405 aa).

The next 10 membrane-spanning stretches (helical) occupy residues 9–29, 41–61, 74–94, 98–118, 138–158, 168–190, 227–247, 252–272, 291–311, and 373–393; these read VFALLLSQSFQSLAGVLVTIV, VFLAGLILSFMSFASIAASFC, VLAGANLLRAVFIILMAYSVT, QAFFWITLLFVFCFSFAGAFF, ANGVISLSNQLFLTAGWGLGG, LVVGAAICLFVLSGASISVLHVN, ALAGSVWSSAILLAFTAAVLH, WWGMFNASYFIGAIVGSVIAI, LVMSALTLLFSFSPVPFLCAL, and IAFIAAAALYIMTFLIALAQP.

The protein belongs to the major facilitator superfamily. Drug:H(+) antiporter-3 (DHA3) (TC 2.A.1.21) family.

Its subcellular location is the cell membrane. This is an uncharacterized protein from Bacillus subtilis (strain 168).